A 761-amino-acid polypeptide reads, in one-letter code: Ribonucleoside-diphosphate reductase 1 subunit alpha (761 aa).

The ATP-cone domain maps to Leu-5–Gly-95. ATP-binding positions include Lys-9, Glu-15–Lys-21, Thr-55, and Lys-91. Residue Thr-209 coordinates GDP. Cys-225 and Cys-462 are joined by a disulfide. DTTP-binding positions include Asp-232–Leu-234, Arg-262, and Arg-269. The residue at position 283 (Lys-283) is an N6-acetyllysine. Asn-437 is a GDP binding site. Asn-437 acts as the Proton acceptor in catalysis. Cys-439 acts as the Cysteine radical intermediate in catalysis. Residues Glu-441 and Glu-623–Ser-625 each bind GDP. Catalysis depends on Glu-441, which acts as the Proton acceptor.

It belongs to the ribonucleoside diphosphate reductase large chain family. Tetramer of two alpha (R1) and two beta (R2) subunits. The B1 protein is a dimer of alpha subunits. A radical transfer pathway occurs between 'Tyr-122' of R2 and R1. Post-translationally, binding of the substrate occurs primarily when the active-site cysteines are reduced.

It catalyses the reaction a 2'-deoxyribonucleoside 5'-diphosphate + [thioredoxin]-disulfide + H2O = a ribonucleoside 5'-diphosphate + [thioredoxin]-dithiol. Under complex allosteric control mediated by deoxynucleoside triphosphates and ATP binding to separate specificity and activation sites on the alpha subunit. The type of nucleotide bound at the specificity site determines substrate preference. It seems probable that ATP makes the enzyme reduce CDP and UDP, dGTP favors ADP reduction and dTTP favors GDP reduction. Stimulated by ATP and inhibited by dATP binding to the activity site. In vitro, its activity is increased by dithiothreitol (DTT) or thioredoxins (non-specific). Inhibited by hydroxyurea, leads to dNTP depletion, replication fork arrest and genomic instability. Provides the precursors necessary for DNA synthesis. Catalyzes the biosynthesis of deoxyribonucleotides from the corresponding ribonucleotides. R1 contains the binding sites for both substrates and allosteric effectors and carries out the actual reduction of the ribonucleotide. It also provides redox-active cysteines. This chain is Ribonucleoside-diphosphate reductase 1 subunit alpha (nrdA), found in Escherichia coli (strain K12).